The chain runs to 531 residues: Cation transporter HKT1;3 (531 aa).

Residues Met1–Pro46 are Cytoplasmic-facing. The next 2 membrane-spanning stretches (helical) occupy residues Leu47–Val67 and Leu108–Ile128. At His129–Lys190 the chain is on the cytoplasmic side. The next 2 membrane-spanning stretches (helical) occupy residues Phe191 to Ile211 and Ile264 to Leu284. The Cytoplasmic portion of the chain corresponds to Arg285 to Ser321. Transmembrane regions (helical) follow at residues Val322–Leu342 and Ser383–Pro403. Residues Arg404–Leu421 lie on the Cytoplasmic side of the membrane. 2 consecutive transmembrane segments (helical) span residues Leu422–Ile442 and Tyr494–Phe514. Over Gly515–Leu530 the chain is Cytoplasmic.

The protein belongs to the TrkH potassium transport family. HKT (TC 2.A.38.3) subfamily. In terms of assembly, interacts with CNIH1. Weakly expressed. In roots, expressed in epidermis, exodermis, cortex, and sieve elements and companion cells of phloem. In mature leaves, expressed in large highly vacuolated cells of the adaxial epidermis, phloem and xylem.

It is found in the endoplasmic reticulum membrane. Its subcellular location is the golgi apparatus membrane. The enzyme catalyses Na(+)(in) = Na(+)(out). In terms of biological role, functions as a highly-selective sodium transporter. Does not seem to function as sodium-potassium cotransporter. May be involved in turgor changes for rolling and unrolling of leaves in response to environmental variations. In Oryza sativa subsp. japonica (Rice), this protein is Cation transporter HKT1;3.